The chain runs to 121 residues: Large ribosomal subunit protein uL14c (121 aa).

The protein belongs to the universal ribosomal protein uL14 family. As to quaternary structure, part of the 50S ribosomal subunit.

It is found in the plastid. It localises to the chloroplast. Binds to 23S rRNA. The polypeptide is Large ribosomal subunit protein uL14c (Oedogonium cardiacum (Filamentous green alga)).